The following is a 385-amino-acid chain: Outer membrane protein assembly factor BamB (385 aa).

The N-terminal stretch at Met-1–Gly-20 is a signal peptide. Residue Cys-21 is the site of N-palmitoyl cysteine attachment. Cys-21 carries the S-diacylglycerol cysteine lipid modification.

Belongs to the BamB family. In terms of assembly, part of the Bam complex.

It is found in the cell outer membrane. Its function is as follows. Part of the outer membrane protein assembly complex, which is involved in assembly and insertion of beta-barrel proteins into the outer membrane. The chain is Outer membrane protein assembly factor BamB from Aliivibrio fischeri (strain ATCC 700601 / ES114) (Vibrio fischeri).